A 209-amino-acid chain; its full sequence is Response regulator protein VraR (209 aa).

The Response regulatory domain occupies 4–120 (KVLFVDDHEM…DIADAVRKTY (117 aa)). D55 carries the 4-aspartylphosphate modification. The HTH luxR-type domain occupies 141–206 (RAELYEMLTE…QAVIYAFQHN (66 aa)). Residues 165-184 (NQEIASASHITIKTVKTHVS) constitute a DNA-binding region (H-T-H motif).

In terms of processing, phosphorylated by VraS.

The protein resides in the cytoplasm. In terms of biological role, member of the two-component regulatory system VraS/VraR involved in the control of the cell wall peptidoglycan biosynthesis. The chain is Response regulator protein VraR (vraR) from Staphylococcus epidermidis (strain ATCC 35984 / DSM 28319 / BCRC 17069 / CCUG 31568 / BM 3577 / RP62A).